We begin with the raw amino-acid sequence, 799 residues long: Phenylalanine--tRNA ligase beta subunit (799 aa).

Residues 40–147 enclose the tRNA-binding domain; the sequence is KSHLSSVITV…KDTTLGISVR (108 aa). In terms of domain architecture, B5 spans 402 to 479; it reads SKTVTIETNL…RTIGYASIRT (78 aa). Residues Asp457, Asp463, Glu466, and Glu467 each contribute to the Mg(2+) site. Residues 707 to 799 enclose the FDX-ACB domain; that stretch reads SHFPQGQLDL…TAKSNGYSLR (93 aa).

This sequence belongs to the phenylalanyl-tRNA synthetase beta subunit family. Type 1 subfamily. As to quaternary structure, tetramer of two alpha and two beta subunits. It depends on Mg(2+) as a cofactor.

The protein resides in the cytoplasm. The catalysed reaction is tRNA(Phe) + L-phenylalanine + ATP = L-phenylalanyl-tRNA(Phe) + AMP + diphosphate + H(+). The polypeptide is Phenylalanine--tRNA ligase beta subunit (Leptospira biflexa serovar Patoc (strain Patoc 1 / Ames)).